Here is a 112-residue protein sequence, read N- to C-terminus: UPF0102 protein Spea_0251 (112 aa).

This sequence belongs to the UPF0102 family.

This is UPF0102 protein Spea_0251 from Shewanella pealeana (strain ATCC 700345 / ANG-SQ1).